A 295-amino-acid polypeptide reads, in one-letter code: Carbapenem-hydrolyzing beta-lactamase transcriptional activator (295 aa).

The region spanning 5 to 62 (LPLNALRAFEASARYLNFTKAGLELHVSQAAVSQQVRTLEQMLGVALFTRVPRGLQLT) is the HTH lysR-type domain. Residues 22-41 (FTKAGLELHVSQAAVSQQVR) constitute a DNA-binding region (H-T-H motif).

This sequence belongs to the LysR transcriptional regulatory family.

Its function is as follows. This protein is a positive regulator of gene expression of carbapenem-hydrolyzing beta-lactamase (NmcA). The sequence is that of Carbapenem-hydrolyzing beta-lactamase transcriptional activator (nmcR) from Enterobacter cloacae.